The sequence spans 199 residues: Histone deacetylase complex subunit SAP25 (199 aa).

2 stretches are compositionally biased toward polar residues: residues 151-163 (QMSQ…SSSA) and 184-199 (QGAD…THCP). The tract at residues 151–199 (QMSQGEPRPSSSAVGPPDHTSDPPSPCGSPSSSQGADLSLPQTPDTHCP) is disordered.

In terms of assembly, may be a component of the mSIN3A corepressor complex. Interacts with SIN3A. Interacts with HDAC2.

The protein resides in the nucleus. The protein localises to the cytoplasm. In terms of biological role, involved in the transcriptional repression mediated by the mSIN3A but not the N-CoR corepressor complex. This Homo sapiens (Human) protein is Histone deacetylase complex subunit SAP25 (SAP25).